A 45-amino-acid chain; its full sequence is Large ribosomal subunit protein bL34 (45 aa).

A compositionally biased stretch (polar residues) spans 1–10; sequence MTQRTLGGTN. Positions 1 to 45 are disordered; it reads MTQRTLGGTNRKQKRTSGFRARMRTHNGRKVIQARRSKGRHRLAV. Positions 11–45 are enriched in basic residues; it reads RKQKRTSGFRARMRTHNGRKVIQARRSKGRHRLAV.

The protein belongs to the bacterial ribosomal protein bL34 family.

The sequence is that of Large ribosomal subunit protein bL34 (rpmH) from Synechocystis sp. (strain ATCC 27184 / PCC 6803 / Kazusa).